Consider the following 322-residue polypeptide: Phosphatidylserine decarboxylase proenzyme (322 aa).

Residues Asp-90, His-147, and Ser-254 each act as charge relay system; for autoendoproteolytic cleavage activity in the active site. The active-site Schiff-base intermediate with substrate; via pyruvic acid; for decarboxylase activity is the Ser-254. At Ser-254 the chain carries Pyruvic acid (Ser); by autocatalysis. The segment at 293-322 (PDAEPAPLPAEEIEAEHDASPLVDDKKDQV) is disordered. Residues 308-322 (EHDASPLVDDKKDQV) are compositionally biased toward basic and acidic residues.

Belongs to the phosphatidylserine decarboxylase family. PSD-B subfamily. Prokaryotic type I sub-subfamily. As to quaternary structure, heterodimer of a large membrane-associated beta subunit and a small pyruvoyl-containing alpha subunit. Pyruvate serves as cofactor. Post-translationally, is synthesized initially as an inactive proenzyme. Formation of the active enzyme involves a self-maturation process in which the active site pyruvoyl group is generated from an internal serine residue via an autocatalytic post-translational modification. Two non-identical subunits are generated from the proenzyme in this reaction, and the pyruvate is formed at the N-terminus of the alpha chain, which is derived from the carboxyl end of the proenzyme. The autoendoproteolytic cleavage occurs by a canonical serine protease mechanism, in which the side chain hydroxyl group of the serine supplies its oxygen atom to form the C-terminus of the beta chain, while the remainder of the serine residue undergoes an oxidative deamination to produce ammonia and the pyruvoyl prosthetic group on the alpha chain. During this reaction, the Ser that is part of the protease active site of the proenzyme becomes the pyruvoyl prosthetic group, which constitutes an essential element of the active site of the mature decarboxylase.

It localises to the cell membrane. The enzyme catalyses a 1,2-diacyl-sn-glycero-3-phospho-L-serine + H(+) = a 1,2-diacyl-sn-glycero-3-phosphoethanolamine + CO2. It participates in phospholipid metabolism; phosphatidylethanolamine biosynthesis; phosphatidylethanolamine from CDP-diacylglycerol: step 2/2. Catalyzes the formation of phosphatidylethanolamine (PtdEtn) from phosphatidylserine (PtdSer). The sequence is that of Phosphatidylserine decarboxylase proenzyme from Escherichia coli O9:H4 (strain HS).